We begin with the raw amino-acid sequence, 152 residues long: Interleukin-3 (152 aa).

The first 19 residues, 1-19 (MSRLPVLLLLQLLVRPGLQ), serve as a signal peptide directing secretion. N-linked (GlcNAc...) asparagine glycosylation is found at Asn-34 and Asn-89. Cys-35 and Cys-103 are oxidised to a cystine.

It belongs to the IL-3 family. Interacts with IL3RA. As to expression, activated T-cells, mast cells, natural killer cells.

The protein localises to the secreted. In terms of biological role, cytokine secreted predominantly by activated T-lymphocytes as well as mast cells and osteoblastic cells that controls the production and differentiation of hematopoietic progenitor cells into lineage-restricted cells. Also stimulates mature basophils, eosinophils, and monocytes to become functionally activated. In addition, plays an important role in neural cell proliferation and survival. Participates as well in bone homeostasis and inhibits osteoclast differentiation by preventing NF-kappa-B nuclear translocation and activation. Mechanistically, exerts its biological effects through a receptor composed of IL3RA subunit and a signal transducing subunit IL3RB. Receptor stimulation results in the rapid activation of JAK2 kinase activity leading to STAT5-mediated transcriptional program. Alternatively, contributes to cell survival under oxidative stress in non-hematopoietic systems by activating pathways mediated by PI3K/AKT and ERK. In Homo sapiens (Human), this protein is Interleukin-3.